A 1204-amino-acid chain; its full sequence is Cingulin (1204 aa).

The segment at 7–357 (MAEPRGPVDH…GVISSGSSKA (351 aa)) is head. A disordered region spans residues 25 to 48 (EPVSGAEMGTLRRGGRRPAKDARA). The ZIM signature appears at 48 to 62 (ASTYGVAVRVQGIAG). An interaction with TJP1/ZO1 region spans residues 54–67 (AVRVQGIAGQPFVV). Disordered regions lie at residues 68 to 174 (LNSG…DTAP) and 186 to 266 (DGQL…FSRA). Polar residues predominate over residues 93 to 119 (ALSSDSELPENPYSQVQGFPAPSQSST). A phosphoserine mark is found at serine 95, serine 96, serine 98, serine 135, serine 137, serine 140, serine 155, serine 165, serine 214, and serine 217. Positions 207–231 (EQRKRSKSLDSRLPRDTLEERERQS) are enriched in basic and acidic residues. Polar residues predominate over residues 232–245 (TNHWNPSTKYNNHV). A compositionally biased stretch (low complexity) spans 247 to 261 (SLKQPAQSPSPSPLS). Residues serine 258, serine 276, serine 338, and serine 351 each carry the phosphoserine modification. A coiled-coil region spans residues 358 to 1161 (MAGQGELARK…SLEKDSWRKA (804 aa)). The tract at residues 379 to 398 (VKKRQKLEPSRAGLERQLEE) is disordered. Lysine 579 is modified (N6-acetyllysine). Positions 1161–1182 (ASRSAAESALKHEGLSSDEEFD) are disordered. Residues 1162–1204 (SRSAAESALKHEGLSSDEEFDSVYDPSSIASLLTESNLQTSSC) form a tail region. Serine 1176, serine 1177, and serine 1183 each carry phosphoserine.

The protein belongs to the cingulin family. As to quaternary structure, homodimer. Interacts with TJP1/ZO1 and SPEF1.

The protein resides in the cell junction. It is found in the tight junction. Probably plays a role in the formation and regulation of the tight junction (TJ) paracellular permeability barrier. The protein is Cingulin of Plecturocebus moloch (Dusky titi monkey).